The sequence spans 341 residues: Anthranilate phosphoribosyltransferase (341 aa).

Residues glycine 79, 82–83 (GD), threonine 87, 89–92 (NIST), 107–115 (KHGNRSISS), and serine 119 each bind 5-phospho-alpha-D-ribose 1-diphosphate. Glycine 79 serves as a coordination point for anthranilate. Serine 91 provides a ligand contact to Mg(2+). Asparagine 110 lines the anthranilate pocket. Residue arginine 164 coordinates anthranilate. Residues aspartate 222 and glutamate 223 each contribute to the Mg(2+) site.

It belongs to the anthranilate phosphoribosyltransferase family. As to quaternary structure, homodimer. It depends on Mg(2+) as a cofactor.

It carries out the reaction N-(5-phospho-beta-D-ribosyl)anthranilate + diphosphate = 5-phospho-alpha-D-ribose 1-diphosphate + anthranilate. Its pathway is amino-acid biosynthesis; L-tryptophan biosynthesis; L-tryptophan from chorismate: step 2/5. Functionally, catalyzes the transfer of the phosphoribosyl group of 5-phosphorylribose-1-pyrophosphate (PRPP) to anthranilate to yield N-(5'-phosphoribosyl)-anthranilate (PRA). This chain is Anthranilate phosphoribosyltransferase, found in Blochmanniella pennsylvanica (strain BPEN).